Here is a 180-residue protein sequence, read N- to C-terminus: Large ribosomal subunit protein uL6 (180 aa).

Belongs to the universal ribosomal protein uL6 family. In terms of assembly, part of the 50S ribosomal subunit.

Functionally, this protein binds to the 23S rRNA, and is important in its secondary structure. It is located near the subunit interface in the base of the L7/L12 stalk, and near the tRNA binding site of the peptidyltransferase center. In Clostridium kluyveri (strain NBRC 12016), this protein is Large ribosomal subunit protein uL6.